The sequence spans 341 residues: Methionine import ATP-binding protein MetN (341 aa).

An ABC transporter domain is found at 9–247 (ISVEQLNKEI…PQSAITEELF (239 aa)). 41–48 (GHSGSGKS) serves as a coordination point for ATP.

Belongs to the ABC transporter superfamily. Methionine importer (TC 3.A.1.24) family. The complex is composed of two ATP-binding proteins (MetN), two transmembrane proteins (MetI) and a solute-binding protein (MetQ).

It is found in the cell inner membrane. The enzyme catalyses L-methionine(out) + ATP + H2O = L-methionine(in) + ADP + phosphate + H(+). It carries out the reaction D-methionine(out) + ATP + H2O = D-methionine(in) + ADP + phosphate + H(+). Its function is as follows. Part of the ABC transporter complex MetNIQ involved in methionine import. Responsible for energy coupling to the transport system. The sequence is that of Methionine import ATP-binding protein MetN from Chlamydia abortus (strain DSM 27085 / S26/3) (Chlamydophila abortus).